A 276-amino-acid chain; its full sequence is 4-chlorobenzoyl coenzyme A dehalogenase-2 (276 aa).

Residue 66 to 71 (AGFDLE) coordinates substrate. The active-site Proton acceptor is the His93. A substrate-binding site is contributed by Gly117. The active-site Nucleophile is the Asp148. A substrate-binding site is contributed by Arg261.

Belongs to the enoyl-CoA hydratase/isomerase family. In terms of assembly, homotetramer.

It carries out the reaction 4-chlorobenzoyl-CoA + H2O = 4-hydroxybenzoyl-CoA + chloride + H(+). It participates in xenobiotic degradation; 4-chlorobenzoate degradation; 4-hydroxybenzoate from 4-chlorobenzoate: step 2/3. Dehalogenates 4-chlorobenzoyl-CoA, 4-iodobenzoyl-CoA, 4-bromobenzoyl-CoA and, at a slower rate, 4-fluorobenzoyl-CoA. Does not dehalogenate 2-chlorobenzoyl-CoA or 3-chlorobenzoyl-CoA. The chain is 4-chlorobenzoyl coenzyme A dehalogenase-2 from Arthrobacter sp.